Here is a 142-residue protein sequence, read N- to C-terminus: Small ribosomal subunit protein uS19 (142 aa).

Ser2 is subject to N-acetylserine. Glycyl lysine isopeptide (Lys-Gly) (interchain with G-Cter in ubiquitin) cross-links involve residues Lys24, Lys35, and Lys64.

It belongs to the universal ribosomal protein uS19 family. Component of the small ribosomal subunit (SSU). Mature yeast ribosomes consist of a small (40S) and a large (60S) subunit. The 40S small subunit contains 1 molecule of ribosomal RNA (18S rRNA) and 33 different proteins (encoded by 57 genes). The large 60S subunit contains 3 rRNA molecules (25S, 5.8S and 5S rRNA) and 46 different proteins (encoded by 81 genes).

The protein resides in the cytoplasm. Functionally, component of the ribosome, a large ribonucleoprotein complex responsible for the synthesis of proteins in the cell. The small ribosomal subunit (SSU) binds messenger RNAs (mRNAs) and translates the encoded message by selecting cognate aminoacyl-transfer RNA (tRNA) molecules. The large subunit (LSU) contains the ribosomal catalytic site termed the peptidyl transferase center (PTC), which catalyzes the formation of peptide bonds, thereby polymerizing the amino acids delivered by tRNAs into a polypeptide chain. The nascent polypeptides leave the ribosome through a tunnel in the LSU and interact with protein factors that function in enzymatic processing, targeting, and the membrane insertion of nascent chains at the exit of the ribosomal tunnel. uS19 is involved in the nuclear export of the small ribosomal subunit precursor. Has a role in the late stage of the assembly of pre-40S particles within the nucleus and controls their export to the cytoplasm. The polypeptide is Small ribosomal subunit protein uS19 (Saccharomyces cerevisiae (strain ATCC 204508 / S288c) (Baker's yeast)).